A 416-amino-acid polypeptide reads, in one-letter code: Maltoporin (416 aa).

The N-terminal stretch at 1–26 (MELTMKKVSVIAAAVAATLAAGSAFA) is a signal peptide.

This sequence belongs to the porin LamB (TC 1.B.3) family. Homotrimer formed of three 18-stranded antiparallel beta-barrels, containing three independent channels.

Its subcellular location is the cell outer membrane. It carries out the reaction beta-maltose(in) = beta-maltose(out). Its function is as follows. Involved in the transport of maltose and maltodextrins. This chain is Maltoporin, found in Vibrio cholerae serotype O1 (strain ATCC 39541 / Classical Ogawa 395 / O395).